The primary structure comprises 416 residues: Alpha-1-antiproteinase (416 aa).

The N-terminal stretch at 1-24 (MALSITRGLLLLAALCCLAPTSLA) is a signal peptide. Asn-68, Asn-105, Asn-143, and Asn-269 each carry an N-linked (GlcNAc...) asparagine glycan. Residues 371 to 390 (GATFLEAIPMSLPPDVEFNR) form an RCL region. Position 381 is a phosphoserine (Ser-381).

The protein belongs to the serpin family. In terms of assembly, interacts with CELA2A. Interacts with ERGIC3 and LMAN1/ERGIC53. Interacts with PRSS1/Trypsin. In terms of tissue distribution, plasma.

It localises to the secreted. In terms of biological role, inhibits human leukocyte elastase, pig pancreatic elastase and bovine trypsin on a 1:1 molar basis. The polypeptide is Alpha-1-antiproteinase (Ovis aries (Sheep)).